We begin with the raw amino-acid sequence, 310 residues long: Membrane protein insertase YidC 2 (310 aa).

Residues 1-23 (MKKTLKRILFSSLSLSILLLLTG) form the signal peptide. C24 is lipidated: N-palmitoyl cysteine. The S-diacylglycerol cysteine moiety is linked to residue C24. 5 helical membrane passes run 33–53 (PYGV…TYFA), 58–78 (LGFG…ILPL), 135–155 (FGGI…AIFF), 180–200 (LTVI…QGVP), and 219–239 (VFMS…GGIF). The tract at residues 262–310 (EYTKNPPKAYKSNNARKDVTSSTKTTESNQAIITSKKTNRNAGKQKRRG) is disordered. Positions 281–297 (TSSTKTTESNQAIITSK) are enriched in polar residues. Basic residues predominate over residues 298-310 (KTNRNAGKQKRRG).

Belongs to the OXA1/ALB3/YidC family. Type 2 subfamily.

The protein localises to the cell membrane. Functionally, required for the insertion and/or proper folding and/or complex formation of integral membrane proteins into the membrane. Involved in integration of membrane proteins that insert both dependently and independently of the Sec translocase complex, as well as at least some lipoproteins. In Streptococcus agalactiae serotype III (strain NEM316), this protein is Membrane protein insertase YidC 2.